The following is a 438-amino-acid chain: Enolase (438 aa).

Substrate contacts are provided by His-159 and Glu-168. The active-site Proton donor is Glu-211. Residues Asp-246, Glu-297, and Asp-322 each contribute to the Mg(2+) site. Substrate is bound by residues Glu-297 and Asp-322. Catalysis depends on Lys-347, which acts as the Proton acceptor. Substrate is bound by residues 374 to 377 (SHRS) and Lys-398.

The protein belongs to the enolase family. Homodimer. Mg(2+) is required as a cofactor.

It is found in the cytoplasm. It carries out the reaction (2R)-2-phosphoglycerate = phosphoenolpyruvate + H2O. Its pathway is carbohydrate degradation; glycolysis; pyruvate from D-glyceraldehyde 3-phosphate: step 4/5. The protein is Enolase (emp-7) of Neurospora crassa (strain ATCC 24698 / 74-OR23-1A / CBS 708.71 / DSM 1257 / FGSC 987).